Here is a 189-residue protein sequence, read N- to C-terminus: Peptidyl-tRNA hydrolase (189 aa).

Y14 is a binding site for tRNA. Residue H19 is the Proton acceptor of the active site. TRNA-binding residues include Y64, N66, and N112.

Belongs to the PTH family. As to quaternary structure, monomer.

The protein resides in the cytoplasm. It catalyses the reaction an N-acyl-L-alpha-aminoacyl-tRNA + H2O = an N-acyl-L-amino acid + a tRNA + H(+). Hydrolyzes ribosome-free peptidyl-tRNAs (with 1 or more amino acids incorporated), which drop off the ribosome during protein synthesis, or as a result of ribosome stalling. Functionally, catalyzes the release of premature peptidyl moieties from peptidyl-tRNA molecules trapped in stalled 50S ribosomal subunits, and thus maintains levels of free tRNAs and 50S ribosomes. This is Peptidyl-tRNA hydrolase from Clostridium botulinum (strain Okra / Type B1).